The following is a 39-amino-acid chain: Phospholipase A2 (39 aa).

Ca(2+) is bound by residues W10, G12, and G14. C11 and C33 form a disulfide bridge. H36 is a catalytic residue. Residue D37 participates in Ca(2+) binding.

Ca(2+) serves as cofactor. Expressed uniformly in tentacles (at protein level).

The protein localises to the secreted. It localises to the nematocyst. It catalyses the reaction a 1,2-diacyl-sn-glycero-3-phosphocholine + H2O = a 1-acyl-sn-glycero-3-phosphocholine + a fatty acid + H(+). Its activity is regulated as follows. Inhibited by morin and p-BPB. In terms of biological role, PA2 catalyzes the calcium-dependent hydrolysis of the 2-acyl groups in 3-sn-phosphoglycerides. Induces insulin secretion in isolated rat islets under high glucose concentration conditions, but not under low glucose concentration conditions. Increases perfusion pressure, renal vascular resistance, urinary flow, glomerular filtration rate, and potassium, sodium, and chloride excretion levels in rat kidney. Does not increase perfusion pressure in the rat mesenteric vascular bed. This Bunodosoma caissarum (Sea anemone) protein is Phospholipase A2.